Reading from the N-terminus, the 377-residue chain is Queuine tRNA-ribosyltransferase (377 aa).

The Proton acceptor role is filled by Asp-89. Residues 89–93 (DSGGF), Asp-143, Gln-187, and Gly-214 contribute to the substrate site. The tract at residues 245 to 251 (GVGKPED) is RNA binding. Asp-264 functions as the Nucleophile in the catalytic mechanism. The RNA binding; important for wobble base 34 recognition stretch occupies residues 269 to 273 (TRNAR). 4 residues coordinate Zn(2+): Cys-302, Cys-304, Cys-307, and His-333.

Belongs to the queuine tRNA-ribosyltransferase family. Homodimer. Within each dimer, one monomer is responsible for RNA recognition and catalysis, while the other monomer binds to the replacement base PreQ1. Zn(2+) serves as cofactor.

The catalysed reaction is 7-aminomethyl-7-carbaguanine + guanosine(34) in tRNA = 7-aminomethyl-7-carbaguanosine(34) in tRNA + guanine. It participates in tRNA modification; tRNA-queuosine biosynthesis. In terms of biological role, catalyzes the base-exchange of a guanine (G) residue with the queuine precursor 7-aminomethyl-7-deazaguanine (PreQ1) at position 34 (anticodon wobble position) in tRNAs with GU(N) anticodons (tRNA-Asp, -Asn, -His and -Tyr). Catalysis occurs through a double-displacement mechanism. The nucleophile active site attacks the C1' of nucleotide 34 to detach the guanine base from the RNA, forming a covalent enzyme-RNA intermediate. The proton acceptor active site deprotonates the incoming PreQ1, allowing a nucleophilic attack on the C1' of the ribose to form the product. After dissociation, two additional enzymatic reactions on the tRNA convert PreQ1 to queuine (Q), resulting in the hypermodified nucleoside queuosine (7-(((4,5-cis-dihydroxy-2-cyclopenten-1-yl)amino)methyl)-7-deazaguanosine). The protein is Queuine tRNA-ribosyltransferase of Shewanella piezotolerans (strain WP3 / JCM 13877).